The chain runs to 303 residues: Mycothiol acetyltransferase (303 aa).

2 consecutive N-acetyltransferase domains span residues 10–156 (ALPG…LAVP) and 162–303 (LAVR…SGPR). Glutamate 41 serves as a coordination point for 1D-myo-inositol 2-(L-cysteinylamino)-2-deoxy-alpha-D-glucopyranoside. 86-88 (LLV) serves as a coordination point for acetyl-CoA. Glutamate 189, lysine 228, and glutamate 235 together coordinate 1D-myo-inositol 2-(L-cysteinylamino)-2-deoxy-alpha-D-glucopyranoside. Acetyl-CoA contacts are provided by residues 239–241 (LGV) and 246–252 (SGAGLGR). 1D-myo-inositol 2-(L-cysteinylamino)-2-deoxy-alpha-D-glucopyranoside is bound at residue tyrosine 272. 277–282 (NLRAVR) is an acetyl-CoA binding site.

Belongs to the acetyltransferase family. MshD subfamily. Monomer.

It carries out the reaction 1D-myo-inositol 2-(L-cysteinylamino)-2-deoxy-alpha-D-glucopyranoside + acetyl-CoA = mycothiol + CoA + H(+). Its function is as follows. Catalyzes the transfer of acetyl from acetyl-CoA to desacetylmycothiol (Cys-GlcN-Ins) to form mycothiol. The chain is Mycothiol acetyltransferase from Kineococcus radiotolerans (strain ATCC BAA-149 / DSM 14245 / SRS30216).